We begin with the raw amino-acid sequence, 709 residues long: MGINLLPIEMDEIRKRLGREPNETEWRVIDAVWSEHCSYKSSKIFLKSFSIDSPNVIMGIKDWQDAGAVDIGDGWAVVIKVESHNHPSAIDPFNGAATGVGGIIRDIISKGAKPIALMDMIRVGNLKIKKNVWLLKNIIAGIAAYGNSIGVPVVGGELSFDDTYNDNPLVDVAAIGIVRKDKIKPSIVDKAGLKLVLAGLTGVDGLGGASFASRKLSGEDEIGAVQIADPFAGKIILDVTLEIADKVEAIKDLGGGGLAVAVTEITNGLGATVDIEKIPLRVKNMNPSDVIISETQERMLYAVEEKNVKEVCEAFEEYEYPCSVIGEITNEPVIKFRYIGKDLVSLPTNVLLNPPRFLWPIKNTKKNVEEKIVDLPLESAIYTVLTHPDLVSKGWAYSQFDYEVNTSTVVKPGDADSAVVSLPNGKLLAIKADANPDMCAEDGYECGKGIVAEAYRNLATVGARGMVAVDHLQFGDPKKAEVYYTFVEAIRGIGEATRFFNIPIVGGKVSFYNENNQGRPIKPTPLIVMAGLVQDKLLKNRVEDNLYVVSVGYTRKELGGSLLSKIFKIPSQAPKVRLQEDLLSSEVVIDSINEGKITFAKDVSRGGLAASLFSILVHGYGVEISTKSILSDTDNVIENLFSESSGRFIVLTNEPEWIVEKSKSKGIVASIIGRVNKKTNILTIDNIDYNLKNIVDNYFNFLEEVMGNG.

His36 is an active-site residue. ATP-binding residues include Tyr39 and Lys80. Residue Glu82 participates in Mg(2+) binding. Substrate contacts are provided by residues 83–86 (SHNH) and Arg105. The Proton acceptor role is filled by His84. Asp106 is a Mg(2+) binding site. Gln226 contributes to the substrate binding site. Residue Asp252 participates in Mg(2+) binding. Residue 294 to 296 (ETQ) participates in substrate binding. The ATP site is built by Asp470 and Gly507. Ser510 provides a ligand contact to substrate.

This sequence belongs to the FGAMS family. In terms of assembly, monomer. Part of the FGAM synthase complex composed of 1 PurL, 1 PurQ and 2 PurS subunits.

The protein localises to the cytoplasm. It catalyses the reaction N(2)-formyl-N(1)-(5-phospho-beta-D-ribosyl)glycinamide + L-glutamine + ATP + H2O = 2-formamido-N(1)-(5-O-phospho-beta-D-ribosyl)acetamidine + L-glutamate + ADP + phosphate + H(+). It participates in purine metabolism; IMP biosynthesis via de novo pathway; 5-amino-1-(5-phospho-D-ribosyl)imidazole from N(2)-formyl-N(1)-(5-phospho-D-ribosyl)glycinamide: step 1/2. Its function is as follows. Part of the phosphoribosylformylglycinamidine synthase complex involved in the purines biosynthetic pathway. Catalyzes the ATP-dependent conversion of formylglycinamide ribonucleotide (FGAR) and glutamine to yield formylglycinamidine ribonucleotide (FGAM) and glutamate. The FGAM synthase complex is composed of three subunits. PurQ produces an ammonia molecule by converting glutamine to glutamate. PurL transfers the ammonia molecule to FGAR to form FGAM in an ATP-dependent manner. PurS interacts with PurQ and PurL and is thought to assist in the transfer of the ammonia molecule from PurQ to PurL. The polypeptide is Phosphoribosylformylglycinamidine synthase subunit PurL (Saccharolobus solfataricus (strain ATCC 35092 / DSM 1617 / JCM 11322 / P2) (Sulfolobus solfataricus)).